A 326-amino-acid chain; its full sequence is Malate dehydrogenase (326 aa).

Residue glycine 12 to alanine 18 coordinates NAD(+). Substrate-binding residues include arginine 93 and arginine 99. NAD(+) is bound by residues asparagine 106, glutamine 113, and valine 130–asparagine 132. Residues asparagine 132 and arginine 163 each coordinate substrate. The active-site Proton acceptor is the histidine 188.

This sequence belongs to the LDH/MDH superfamily. MDH type 2 family.

It carries out the reaction (S)-malate + NAD(+) = oxaloacetate + NADH + H(+). Catalyzes the reversible oxidation of malate to oxaloacetate. The chain is Malate dehydrogenase from Chlamydia trachomatis serovar A (strain ATCC VR-571B / DSM 19440 / HAR-13).